A 133-amino-acid chain; its full sequence is ATP synthase epsilon chain, chloroplastic (133 aa).

This sequence belongs to the ATPase epsilon chain family. F-type ATPases have 2 components, CF(1) - the catalytic core - and CF(0) - the membrane proton channel. CF(1) has five subunits: alpha(3), beta(3), gamma(1), delta(1), epsilon(1). CF(0) has three main subunits: a, b and c.

It is found in the plastid. The protein resides in the chloroplast thylakoid membrane. Its function is as follows. Produces ATP from ADP in the presence of a proton gradient across the membrane. In Atropa belladonna (Belladonna), this protein is ATP synthase epsilon chain, chloroplastic.